The primary structure comprises 141 residues: Hemoglobin subunit alpha-D (141 aa).

Residues 1–141 (MLTADDKKLI…VAAVLAEKYR (141 aa)) enclose the Globin domain. His58 and His87 together coordinate heme b.

The protein belongs to the globin family. In terms of assembly, heterotetramer of two alpha-D chains and two beta chains. Red blood cells.

In terms of biological role, involved in oxygen transport from the lung to the various peripheral tissues. The sequence is that of Hemoglobin subunit alpha-D (HBAD) from Struthio camelus (Common ostrich).